Here is a 356-residue protein sequence, read N- to C-terminus: Heat-inducible transcription repressor HrcA (356 aa).

This sequence belongs to the HrcA family.

Its function is as follows. Negative regulator of class I heat shock genes (grpE-dnaK-dnaJ and groELS operons). Prevents heat-shock induction of these operons. This chain is Heat-inducible transcription repressor HrcA, found in Gluconobacter oxydans (strain 621H) (Gluconobacter suboxydans).